Reading from the N-terminus, the 425-residue chain is Serine--tRNA ligase (425 aa).

L-serine is bound at residue 230–232; that stretch reads TAE. Residue 261-263 participates in ATP binding; the sequence is RSE. Residue Glu284 coordinates L-serine. 348-351 provides a ligand contact to ATP; the sequence is EISS. Position 384 (Ser384) interacts with L-serine.

The protein belongs to the class-II aminoacyl-tRNA synthetase family. Type-1 seryl-tRNA synthetase subfamily. Homodimer. The tRNA molecule binds across the dimer.

The protein localises to the cytoplasm. It catalyses the reaction tRNA(Ser) + L-serine + ATP = L-seryl-tRNA(Ser) + AMP + diphosphate + H(+). It carries out the reaction tRNA(Sec) + L-serine + ATP = L-seryl-tRNA(Sec) + AMP + diphosphate + H(+). It functions in the pathway aminoacyl-tRNA biosynthesis; selenocysteinyl-tRNA(Sec) biosynthesis; L-seryl-tRNA(Sec) from L-serine and tRNA(Sec): step 1/1. Its function is as follows. Catalyzes the attachment of serine to tRNA(Ser). Is also able to aminoacylate tRNA(Sec) with serine, to form the misacylated tRNA L-seryl-tRNA(Sec), which will be further converted into selenocysteinyl-tRNA(Sec). The protein is Serine--tRNA ligase of Nitratidesulfovibrio vulgaris (strain DSM 19637 / Miyazaki F) (Desulfovibrio vulgaris).